Here is a 131-residue protein sequence, read N- to C-terminus: Arsenate reductase (131 aa).

Catalysis depends on nucleophile residues C10, C82, and C89. 2 cysteine pairs are disulfide-bonded: C10-C82 and C82-C89.

The protein belongs to the low molecular weight phosphotyrosine protein phosphatase family. Thioredoxin-coupled ArsC subfamily.

Its subcellular location is the cytoplasm. It carries out the reaction arsenate + [thioredoxin]-dithiol + H(+) = arsenite + [thioredoxin]-disulfide + H2O. Catalyzes the reduction of arsenate [As(V)] to arsenite [As(III)]. This is Arsenate reductase from Staphylococcus aureus (strain COL).